A 162-amino-acid polypeptide reads, in one-letter code: NADH-quinone oxidoreductase subunit I (162 aa).

4Fe-4S ferredoxin-type domains are found at residues 53–83 and 93–122; these read LRRY…IDSE and TRYD…ETRI. The [4Fe-4S] cluster site is built by C63, C66, C69, C73, C102, C105, C108, and C112.

This sequence belongs to the complex I 23 kDa subunit family. As to quaternary structure, NDH-1 is composed of 14 different subunits. Subunits NuoA, H, J, K, L, M, N constitute the membrane sector of the complex. [4Fe-4S] cluster is required as a cofactor.

It localises to the cell inner membrane. It carries out the reaction a quinone + NADH + 5 H(+)(in) = a quinol + NAD(+) + 4 H(+)(out). In terms of biological role, NDH-1 shuttles electrons from NADH, via FMN and iron-sulfur (Fe-S) centers, to quinones in the respiratory chain. The immediate electron acceptor for the enzyme in this species is believed to be ubiquinone. Couples the redox reaction to proton translocation (for every two electrons transferred, four hydrogen ions are translocated across the cytoplasmic membrane), and thus conserves the redox energy in a proton gradient. The sequence is that of NADH-quinone oxidoreductase subunit I from Thiobacillus denitrificans (strain ATCC 25259 / T1).